The following is a 609-amino-acid chain: Beta-(1--&gt;2)glucan export ATP-binding/permease protein NdvA (609 aa).

Residues 21-311 (GWILAGANLL…VVSFINSVFM (291 aa)) form the ABC transmembrane type-1 domain. The next 6 membrane-spanning stretches (helical) occupy residues 22–42 (WILAGANLLLAGAQFAEPVLF), 68–88 (LLAVWAAFGLFTILCGVTVAL), 146–166 (EHFAAMMSLVVLLPLSLYINW), 167–187 (RLAILLFALCIVFTMLTTLVV), 248–268 (WWAVVTVMTRASTTITILAIF), and 285–305 (IVMFVSFATMLIQRLEQVVSF). The ABC transporter domain occupies 345-579 (VEFNDVSFSY…GGHFAQLAKA (235 aa)). 378–385 (GPTGAGKS) is an ATP binding site.

The protein belongs to the ABC transporter superfamily. Beta-(1--&gt;2)glucan exporter (TC 3.A.1.108.1) family. As to quaternary structure, homodimer.

Its subcellular location is the cell inner membrane. The enzyme catalyses [(1-&gt;2)-beta-D-glucosyl](n)(in) + ATP + H2O = [(1-&gt;2)-beta-D-glucosyl](n)(out) + ADP + phosphate + H(+). In terms of biological role, involved in beta-(1--&gt;2)glucan export. Transmembrane domains (TMD) form a pore in the inner membrane and the ATP-binding domain (NBD) is responsible for energy generation. The chain is Beta-(1--&gt;2)glucan export ATP-binding/permease protein NdvA from Nitrobacter winogradskyi (strain ATCC 25391 / DSM 10237 / CIP 104748 / NCIMB 11846 / Nb-255).